Consider the following 432-residue polypeptide: MSKIVKVLGREIIDSRGNPTVEAEVHLESGFVGMAAAPSGASTGSREALELRDGDKSRFLGKGVLKAIAAVNGPIAEALIGKDAKNQAEIDQIMIDLDGTENKAKFGANAILAVSLANAKAAAAAKSMPLYAHIAELNGTPGVFSMPLPMMNIINGGEHADNNVDIQEFMIQPVGAKTLKEAVRMGAEVFHNLAKVLKSKGYSTAVGDEGGFAPNLKSNAEALEVIAEAVAAAGYELGKDVTLAMDCAASEFYNKEDGIYDLKGEGKKFTAEEFNHYLAGLVEQFPIVSIEDGLDESDWAGFKHQTELLGDKIQLVGDDLFVTNTKILARGIEEGITNSILIKFNQIGSLTETLAAIKMAKDAGFTAVISHRSGETEDATIADLAVGTAAGQIKTGSMSRSDRVAKYNQLIRIEEALGELAPFNGLKEVKGQ.

(2R)-2-phosphoglycerate is bound at residue Gln167. Glu209 (proton donor) is an active-site residue. Positions 246, 291, and 318 each coordinate Mg(2+). (2R)-2-phosphoglycerate-binding residues include Lys343, Arg372, Ser373, and Lys394. Lys343 functions as the Proton acceptor in the catalytic mechanism.

This sequence belongs to the enolase family. Component of the RNA degradosome, a multiprotein complex involved in RNA processing and mRNA degradation. The cofactor is Mg(2+).

Its subcellular location is the cytoplasm. The protein localises to the secreted. It is found in the cell surface. The catalysed reaction is (2R)-2-phosphoglycerate = phosphoenolpyruvate + H2O. It functions in the pathway carbohydrate degradation; glycolysis; pyruvate from D-glyceraldehyde 3-phosphate: step 4/5. Functionally, catalyzes the reversible conversion of 2-phosphoglycerate (2-PG) into phosphoenolpyruvate (PEP). It is essential for the degradation of carbohydrates via glycolysis. The polypeptide is Enolase (Aliivibrio salmonicida (strain LFI1238) (Vibrio salmonicida (strain LFI1238))).